Here is a 364-residue protein sequence, read N- to C-terminus: Programmed cell death protein 2-like (364 aa).

Ala2 is modified (N-acetylalanine). Residues 125–150 (EGSQDWGSDTEETPPPPASDLGSDSN) form a disordered region.

Functionally, over-expression suppresses AP1, CREB, NFAT, and NF-kB transcriptional activation, and delays cell cycle progression at S phase. In Mus musculus (Mouse), this protein is Programmed cell death protein 2-like (Pdcd2l).